A 507-amino-acid polypeptide reads, in one-letter code: MATLSRNLRLSLDTPTSTFVRTKIVCTIGPKTMSEEALIKLIETGMNVCRLNFSHGTHDYHGQVIKNVRSAMEKTGKIIAIMLDTKGPEIRTGKIEDRCGYVDLFVGQEILVDTNMNQPGTSFRISIDYKGLLDSVKVGGYILIADGVISLSITAVEKEKGHVVCRVNNNSRLGENKNVHLPGAIVNLPAVSEKDILDIKFGVEQNVDFIAASFIRKADDVNEIREILGEKGKDIQIISKIENVEGVDNFNEILEVSDGIMVARGDLGVEVQMEKIFVAQKMIVSKCNAAGKPVITATQMLESMIKNPRPTRAEATDVANAVLDGSDCVMLSGETASGDYPYEAVDIMAKICREAELVESSTDYQTLFAALKLSSAKPVSIAETVASYAVATAIDLKADLIITLTETGLTARLVSKYRPSIPIIAVTSWSYTVKHLLATRGAIPFLVESLVGTDKLVESCLEYAMKHNLCKKGSRVVIVSGVMEGVPGKTNSLRVLTVGESIKDLKV.

Arginine 50 lines the substrate pocket. Residues asparagine 52, serine 54, aspartate 84, and threonine 85 each contribute to the K(+) site. 52 to 55 (NFSH) serves as a coordination point for ATP. The ATP site is built by arginine 91 and lysine 177. A Mg(2+)-binding site is contributed by glutamate 242. Residues glycine 265, aspartate 266, and threonine 298 each contribute to the substrate site. Aspartate 266 serves as a coordination point for Mg(2+).

Belongs to the pyruvate kinase family. Homotetramer. Mg(2+) serves as cofactor. The cofactor is K(+).

It catalyses the reaction pyruvate + ATP = phosphoenolpyruvate + ADP + H(+). It participates in carbohydrate degradation; glycolysis; pyruvate from D-glyceraldehyde 3-phosphate: step 5/5. This is Pyruvate kinase (pyk) from Dictyostelium discoideum (Social amoeba).